A 388-amino-acid chain; its full sequence is Pyruvate dehydrogenase E1 component subunit alpha, testis-specific form, mitochondrial (388 aa).

The N-terminal 27 residues, 1-27 (MLAAFISRVLRRVAQKSARRVLVASRN), are a transit peptide targeting the mitochondrion. Pyruvate-binding residues include His-90, Tyr-116, Arg-117, Gly-163, Val-165, Asp-194, Gly-195, Ala-196, Asn-223, and Tyr-225. Thiamine diphosphate contacts are provided by Tyr-116, Arg-117, Gly-163, Val-165, Asp-194, Gly-195, Ala-196, and Asn-223. Asp-194 is a binding site for Mg(2+). Mg(2+) contacts are provided by Asn-223 and Tyr-225. His-290 contributes to the thiamine diphosphate binding site. Ser-291 carries the post-translational modification Phosphoserine; by PDK1, PDK2, PDK3 and PDK4. Position 293 is a phosphoserine (Ser-293). At Ser-298 the chain carries Phosphoserine; by PDK3.

In terms of assembly, heterotetramer of two PDHA2 and two PDHB subunits. The heterotetramer interacts with DLAT, and is part of the multimeric pyruvate dehydrogenase complex that contains multiple copies of pyruvate dehydrogenase (E1), dihydrolipoamide acetyltransferase (DLAT, E2) and lipoamide dehydrogenase (DLD, E3). These subunits are bound to an inner core composed of about 48 DLAT and 12 PDHX molecules. It depends on thiamine diphosphate as a cofactor. The cofactor is Mg(2+). Post-translationally, phosphorylation at Ser-291, Ser-293 and Ser-298 by PDK family kinases inactivates the enzyme; for this phosphorylation at a single site is sufficient. Phosphorylation at Ser-293 interferes with access to active site, and thereby inactivates the enzyme. Dephosphorylation at all three sites, i.e. at Ser-291, Ser-293 and Ser-298, is required for reactivation. As to expression, testis. Expressed in postmeiotic spermatogenic cells.

It is found in the mitochondrion matrix. It catalyses the reaction N(6)-[(R)-lipoyl]-L-lysyl-[protein] + pyruvate + H(+) = N(6)-[(R)-S(8)-acetyldihydrolipoyl]-L-lysyl-[protein] + CO2. Its activity is regulated as follows. Pyruvate dehydrogenase activity is inhibited by phosphorylation of PDHA2; it is reactivated by dephosphorylation. In terms of biological role, the pyruvate dehydrogenase complex catalyzes the overall conversion of pyruvate to acetyl-CoA and CO(2), and thereby links the glycolytic pathway to the tricarboxylic cycle. The chain is Pyruvate dehydrogenase E1 component subunit alpha, testis-specific form, mitochondrial (PDHA2) from Homo sapiens (Human).